We begin with the raw amino-acid sequence, 596 residues long: Pumilio homolog 12 (596 aa).

Residues 254-596 form the PUM-HD domain; the sequence is LNEDLTMSLN…KVLSALSSKK (343 aa). Pumilio repeat units lie at residues 277–312, 313–348, 349–388, 389–424, 425–460, 461–496, 497–532, and 533–570; these read EARGKIYYLAKDQHGCRFLQRIFSEKDGNDIEMIFN, EIIDYISELMMDPFGNYLVQKLLEVCNEDQRMQIVH, SITRKPGLLIKISCDMHGTRAVQKIVETAKREEEISIIIS, ALKHGIVHLIKNVNGNHVVQRCLQYLLPYCGKFLFE, AAITHCVELATDRHGCCVLQKCLGYSEGEQKQHLVS, EIASNALLLSQDPFGNYVLQYVFELQLQWATFEILE, QLEGNYTELSMQKCSSNVVEKCLKLADDKHRARIIR, and ELINYGRLDQVMLDPYGNYVIQAALKQSKGNVHALLVD.

It localises to the cytoplasm. The protein localises to the nucleus. Functionally, sequence-specific RNA-binding protein that regulates translation and mRNA stability by binding the 3'-UTR of target mRNAs. The chain is Pumilio homolog 12 (APUM12) from Arabidopsis thaliana (Mouse-ear cress).